The following is a 560-amino-acid chain: Eukaryotic translation initiation factor 3 subunit D-1 (560 aa).

The tract at residues 98-166 (VQKPPHQRGR…RGPPPKMRES (69 aa)) is disordered. The segment covering 100–121 (KPPHQRGRFRNMRNSRSGRGRN) has biased composition (basic residues). Position 128 is a phosphothreonine (Thr128). Positions 147–156 (GRGMGKKFGH) are enriched in basic residues. An RNA gate region spans residues 291 to 305 (EFDLLTVNESSVEPP).

Belongs to the eIF-3 subunit D family. Component of the eukaryotic translation initiation factor 3 (eIF-3) complex. The eIF-3 complex interacts with pix.

It is found in the cytoplasm. Its function is as follows. mRNA cap-binding component of the eukaryotic translation initiation factor 3 (eIF-3) complex, which is involved in protein synthesis of a specialized repertoire of mRNAs and, together with other initiation factors, stimulates binding of mRNA and methionyl-tRNAi to the 40S ribosome. The eIF-3 complex specifically targets and initiates translation of a subset of mRNAs involved in cell proliferation. In the eIF-3 complex, eif3d specifically recognizes and binds the 7-methylguanosine cap of a subset of mRNAs. This is Eukaryotic translation initiation factor 3 subunit D-1 from Drosophila yakuba (Fruit fly).